The sequence spans 1076 residues: DNA-directed RNA polymerase subunit beta (1076 aa).

Belongs to the RNA polymerase beta chain family. In plastids the minimal PEP RNA polymerase catalytic core is composed of four subunits: alpha, beta, beta', and beta''. When a (nuclear-encoded) sigma factor is associated with the core the holoenzyme is formed, which can initiate transcription.

The protein localises to the plastid. Its subcellular location is the chloroplast. The catalysed reaction is RNA(n) + a ribonucleoside 5'-triphosphate = RNA(n+1) + diphosphate. In terms of biological role, DNA-dependent RNA polymerase catalyzes the transcription of DNA into RNA using the four ribonucleoside triphosphates as substrates. The protein is DNA-directed RNA polymerase subunit beta of Lolium perenne (Perennial ryegrass).